A 680-amino-acid polypeptide reads, in one-letter code: Pescadillo homolog (680 aa).

Positions 315-336 (GEDEKPKAITNGEGESETPTDA) are disordered. In terms of domain architecture, BRCT spans 359–471 (DPSQLFANCT…ELKEPNQYAP (113 aa)). Residues 494 to 680 (VPLEEQQTEA…ERKMAKGKAT (187 aa)) form a disordered region. 3 stretches are compositionally biased toward acidic residues: residues 511-530 (DVED…DDEA), 543-556 (GSDD…EEAD), and 565-576 (AEVDDASEDDEQ). 3 stretches are compositionally biased toward basic and acidic residues: residues 597 to 610 (KASE…DPKS), 617 to 635 (RKEL…ERAK), and 654 to 664 (NKKDAESEKLR). Positions 609–680 (KSKAKQQKRK…ERKMAKGKAT (72 aa)) form a coiled coil. Basic residues predominate over residues 665–680 (EKRRRIERKMAKGKAT).

This sequence belongs to the pescadillo family. Component of the NOP7 complex, composed of ERB1, NOP7 and YTM1. The complex is held together by ERB1, which interacts with NOP7 via its N-terminal domain and with YTM1 via a high-affinity interaction between the seven-bladed beta-propeller domains of the 2 proteins. The NOP7 complex associates with the 66S pre-ribosome.

It is found in the nucleus. Its subcellular location is the nucleolus. It localises to the nucleoplasm. In terms of biological role, component of the NOP7 complex, which is required for maturation of the 25S and 5.8S ribosomal RNAs and formation of the 60S ribosome. The protein is Pescadillo homolog of Pyricularia oryzae (strain 70-15 / ATCC MYA-4617 / FGSC 8958) (Rice blast fungus).